We begin with the raw amino-acid sequence, 325 residues long: VSG expression site-associated protein 117A (325 aa).

Positions 1–23 are cleaved as a signal peptide; it reads MKVTIVELVVWLFSVNFFVVVAE. N-linked (GlcNAc...) asparagine glycans are attached at residues Asn-72, Asn-290, and Asn-313.

Not known but may be related to activation of the variant surface glycoprotein genes. The chain is VSG expression site-associated protein 117A from Trypanosoma brucei brucei.